Here is a 453-residue protein sequence, read N- to C-terminus: Transcription factor bHLH110 (453 aa).

Disordered stretches follow at residues 1-37 (MDSA…YGAS) and 177-197 (SSLP…RGNF). 2 stretches are compositionally biased toward low complexity: residues 8-32 (QLQD…SDPS) and 177-192 (SSLP…SSQS). The bHLH domain occupies 322–371 (VESRSSCPPFKVRKEKLGDRIAALQQLVSPFGKTDTASVLMEAIGYIKFL). The interval 386–411 (SRNRPGKASQLVSQSQEGDEEETRDL) is disordered.

In terms of assembly, homodimer.

Its subcellular location is the nucleus. The polypeptide is Transcription factor bHLH110 (BHLH110) (Arabidopsis thaliana (Mouse-ear cress)).